The sequence spans 151 residues: MKKIDVKILDSRIGNEFPLPAYATSGSAGLDLRALIEEGFDLQPGETKLIPTGLSIYIADPNLAAVILPRSGLGHKHGIVLGNLVGLIDSDYQGPLMVSMWNRGEQPFRIEVGDRIAQLVFVPVVQAEFNIVTDFTQTERGEGGFGHSGKQ.

Residues 70–72 (RSG), N83, 87–89 (LID), and M97 contribute to the substrate site.

The protein belongs to the dUTPase family. Mg(2+) is required as a cofactor.

The enzyme catalyses dUTP + H2O = dUMP + diphosphate + H(+). Its pathway is pyrimidine metabolism; dUMP biosynthesis; dUMP from dCTP (dUTP route): step 2/2. In terms of biological role, this enzyme is involved in nucleotide metabolism: it produces dUMP, the immediate precursor of thymidine nucleotides and it decreases the intracellular concentration of dUTP so that uracil cannot be incorporated into DNA. This Mannheimia succiniciproducens (strain KCTC 0769BP / MBEL55E) protein is Deoxyuridine 5'-triphosphate nucleotidohydrolase.